Here is a 467-residue protein sequence, read N- to C-terminus: ATP synthase subunit beta 1 (467 aa).

Position 150–157 (150–157 (GGAGVGKT)) interacts with ATP.

Belongs to the ATPase alpha/beta chains family. In terms of assembly, F-type ATPases have 2 components, CF(1) - the catalytic core - and CF(0) - the membrane proton channel. CF(1) has five subunits: alpha(3), beta(3), gamma(1), delta(1), epsilon(1). CF(0) has three main subunits: a(1), b(2) and c(9-12). The alpha and beta chains form an alternating ring which encloses part of the gamma chain. CF(1) is attached to CF(0) by a central stalk formed by the gamma and epsilon chains, while a peripheral stalk is formed by the delta and b chains.

The protein localises to the cell inner membrane. It catalyses the reaction ATP + H2O + 4 H(+)(in) = ADP + phosphate + 5 H(+)(out). Functionally, produces ATP from ADP in the presence of a proton gradient across the membrane. The catalytic sites are hosted primarily by the beta subunits. The polypeptide is ATP synthase subunit beta 1 (Vibrio campbellii (strain ATCC BAA-1116)).